Reading from the N-terminus, the 138-residue chain is Lutropin subunit beta (138 aa).

The N-terminal stretch at 1–19 (RYQELTVLLLLLLEGGSWG) is a signal peptide. 6 cysteine pairs are disulfide-bonded: Cys-27/Cys-75, Cys-41/Cys-90, Cys-44/Cys-128, Cys-52/Cys-106, Cys-56/Cys-108, and Cys-111/Cys-118. N-linked (GlcNAc...) asparagine glycosylation occurs at Asn-31.

It belongs to the glycoprotein hormones subunit beta family. Heterodimer of a common alpha chain and a unique beta chain which confers biological specificity to thyrotropin, lutropin, follitropin and gonadotropin.

The protein localises to the secreted. Promotes spermatogenesis and ovulation by stimulating the testes and ovaries to synthesize steroids. This Osphranter rufus (Red kangaroo) protein is Lutropin subunit beta (LHB).